The primary structure comprises 194 residues: Acireductone dioxygenase 1 (194 aa).

The interval 1 to 21 (MEAWYMDDSADDQRKPHHRSP) is disordered. Residues His-87, His-89, Glu-93, and His-132 each coordinate Fe(2+). Residues His-87, His-89, Glu-93, and His-132 each contribute to the Ni(2+) site.

This sequence belongs to the acireductone dioxygenase (ARD) family. The cofactor is Fe(2+). It depends on Ni(2+) as a cofactor.

Its subcellular location is the cytoplasm. The protein localises to the nucleus. It carries out the reaction 1,2-dihydroxy-5-(methylsulfanyl)pent-1-en-3-one + O2 = 4-methylsulfanyl-2-oxobutanoate + formate + 2 H(+). The enzyme catalyses 1,2-dihydroxy-5-(methylsulfanyl)pent-1-en-3-one + O2 = 3-(methylsulfanyl)propanoate + CO + formate + 2 H(+). Its pathway is amino-acid biosynthesis; L-methionine biosynthesis via salvage pathway; L-methionine from S-methyl-5-thio-alpha-D-ribose 1-phosphate: step 5/6. Functionally, catalyzes 2 different reactions between oxygen and the acireductone 1,2-dihydroxy-3-keto-5-methylthiopentene (DHK-MTPene) depending upon the metal bound in the active site. Fe-containing acireductone dioxygenase (Fe-ARD) produces formate and 2-keto-4-methylthiobutyrate (KMTB), the alpha-ketoacid precursor of methionine in the methionine recycle pathway. Ni-containing acireductone dioxygenase (Ni-ARD) produces methylthiopropionate, carbon monoxide and formate, and does not lie on the methionine recycle pathway. The chain is Acireductone dioxygenase 1 from Physcomitrium patens (Spreading-leaved earth moss).